The following is a 126-amino-acid chain: Small ribosomal subunit protein uS12 (126 aa).

Positions 1 to 26 (MPTINQLVRKGRASETTKSKSPALQD) are disordered. D89 bears the 3-methylthioaspartic acid mark. The tract at residues 101–126 (SLDTQGVKDRKQARSKYGAKRAKAAK) is disordered. A compositionally biased stretch (basic residues) spans 113–126 (ARSKYGAKRAKAAK).

It belongs to the universal ribosomal protein uS12 family. As to quaternary structure, part of the 30S ribosomal subunit. Contacts proteins S8 and S17. May interact with IF1 in the 30S initiation complex.

Its function is as follows. With S4 and S5 plays an important role in translational accuracy. Functionally, interacts with and stabilizes bases of the 16S rRNA that are involved in tRNA selection in the A site and with the mRNA backbone. Located at the interface of the 30S and 50S subunits, it traverses the body of the 30S subunit contacting proteins on the other side and probably holding the rRNA structure together. The combined cluster of proteins S8, S12 and S17 appears to hold together the shoulder and platform of the 30S subunit. In Burkholderia pseudomallei (strain 1106a), this protein is Small ribosomal subunit protein uS12.